The primary structure comprises 117 residues: Large ribosomal subunit protein uL22 (117 aa).

The protein belongs to the universal ribosomal protein uL22 family. As to quaternary structure, part of the 50S ribosomal subunit.

Functionally, this protein binds specifically to 23S rRNA; its binding is stimulated by other ribosomal proteins, e.g. L4, L17, and L20. It is important during the early stages of 50S assembly. It makes multiple contacts with different domains of the 23S rRNA in the assembled 50S subunit and ribosome. In terms of biological role, the globular domain of the protein is located near the polypeptide exit tunnel on the outside of the subunit, while an extended beta-hairpin is found that lines the wall of the exit tunnel in the center of the 70S ribosome. In Lactobacillus helveticus (strain DPC 4571), this protein is Large ribosomal subunit protein uL22.